The sequence spans 380 residues: DNA replication and repair protein RecF (380 aa).

30–37 provides a ligand contact to ATP; sequence GENAQGKT.

This sequence belongs to the RecF family.

The protein resides in the cytoplasm. Its function is as follows. The RecF protein is involved in DNA metabolism; it is required for DNA replication and normal SOS inducibility. RecF binds preferentially to single-stranded, linear DNA. It also seems to bind ATP. This Synechococcus sp. (strain JA-3-3Ab) (Cyanobacteria bacterium Yellowstone A-Prime) protein is DNA replication and repair protein RecF.